A 101-amino-acid chain; its full sequence is NADH-quinone oxidoreductase subunit K (101 aa).

3 consecutive transmembrane segments (helical) span residues 2–22 (TLSA…YGAL), 28–48 (VIVL…FVAF), and 62–82 (FALF…AALI).

The protein belongs to the complex I subunit 4L family. NDH-1 is composed of 14 different subunits. Subunits NuoA, H, J, K, L, M, N constitute the membrane sector of the complex.

Its subcellular location is the cell membrane. It catalyses the reaction a quinone + NADH + 5 H(+)(in) = a quinol + NAD(+) + 4 H(+)(out). Functionally, NDH-1 shuttles electrons from NADH, via FMN and iron-sulfur (Fe-S) centers, to quinones in the respiratory chain. The immediate electron acceptor for the enzyme in this species is believed to be a menaquinone. Couples the redox reaction to proton translocation (for every two electrons transferred, four hydrogen ions are translocated across the cytoplasmic membrane), and thus conserves the redox energy in a proton gradient. The polypeptide is NADH-quinone oxidoreductase subunit K (Geobacillus kaustophilus (strain HTA426)).